A 247-amino-acid chain; its full sequence is Uridylate kinase (247 aa).

Residue 18 to 21 participates in ATP binding; the sequence is KLSG. Residue Gly60 coordinates UMP. The ATP site is built by Gly61 and Arg65. Residues Asp80 and 141-148 contribute to the UMP site; that span reads TGNPFFTT. Positions 168, 174, and 177 each coordinate ATP.

It belongs to the UMP kinase family. Homohexamer.

The protein resides in the cytoplasm. It carries out the reaction UMP + ATP = UDP + ADP. It participates in pyrimidine metabolism; CTP biosynthesis via de novo pathway; UDP from UMP (UMPK route): step 1/1. With respect to regulation, inhibited by UTP. Functionally, catalyzes the reversible phosphorylation of UMP to UDP. This Pseudomonas fluorescens (strain ATCC BAA-477 / NRRL B-23932 / Pf-5) protein is Uridylate kinase.